A 129-amino-acid chain; its full sequence is M-zodatoxin-Lt8c (129 aa).

A signal peptide spans 1–20; the sequence is MKYFVVALALVAAFACIAES. Residues 21 to 60 constitute a propeptide that is removed on maturation; it reads KPAESEHELAEVEEENELADLEDAVWLEHLADLSDLEEAR. A Processing quadruplet motif motif is present at residues 57 to 60; sequence EEAR.

Cleavage of the propeptide depends on the processing quadruplet motif (XXXR, with at least one of X being E). In terms of tissue distribution, expressed by the venom gland.

The protein resides in the secreted. Insecticidal, cytolytic and antimicrobial peptide. Forms voltage-dependent, ion-permeable channels in membranes. At high concentration causes cell membrane lysis. In Lachesana tarabaevi (Spider), this protein is M-zodatoxin-Lt8c (cit 1-3).